The sequence spans 342 residues: Small GTPase LIP1 (342 aa).

The segment at 12 to 285 is small GTPase-like; that stretch reads KEQILAPLCG…FHGDPYKYNN (274 aa). GTP is bound by residues 29–36, 90–94, and 160–163; these read GDSGVGKT, DVSGH, and NKAD. Disordered regions lie at residues 274–313 and 323–342; these read TSFH…TPDN and SVQE…DINV. The segment covering 323–333 has biased composition (polar residues); it reads SVQETTNNGSA.

The protein belongs to the small GTPase superfamily.

It localises to the nucleus. The protein localises to the cytoplasm. In terms of biological role, functional small GTPase that acts as a negative factor controlling the light-dependent period shortening of circadian rhythms and light-induced phase resetting during the subjective night. May protect the clock from excessive or mistimed light. Suppresses red and blue light-mediated photomorphogenesis and is required for light-controlled inhibition of endoreplication and tolerance to salt stress. The entrainment of the circadian clock is independent from the other pleiotropic effects. Could be a regulator of seedling establishment. This chain is Small GTPase LIP1, found in Arabidopsis thaliana (Mouse-ear cress).